Reading from the N-terminus, the 422-residue chain is Keratan-sulfate endo-1,4-beta-galactosidase (422 aa).

A signal peptide spans methionine 1–leucine 46. One can recognise a GH16 domain in the interval asparagine 47–phenylalanine 292. Residue glutamate 171 is the Nucleophile of the active site. Glutamate 176 acts as the Proton donor in catalysis. The CBM-cenC domain maps to leucine 291–lysine 406.

The protein belongs to the glycosyl hydrolase 16 family.

The protein resides in the secreted. It catalyses the reaction Endohydrolysis of (1-&gt;4)-beta-D-galactosidic linkages in keratan sulfate.. In terms of biological role, hydrolyzes internal endo-beta-galactosyl linkages in keratan sulfate and in various neolacto-type glycosphingolipids, producing sulfated and non-sulfated disaccharides, and glucosylceramides respectivly. The polypeptide is Keratan-sulfate endo-1,4-beta-galactosidase (Sphingobacterium multivorum).